We begin with the raw amino-acid sequence, 422 residues long: UDP-N-acetylglucosamine 1-carboxyvinyltransferase (422 aa).

Position 22–23 (22–23) interacts with phosphoenolpyruvate; sequence KN. Arg-92 provides a ligand contact to UDP-N-acetyl-alpha-D-glucosamine. Cys-116 functions as the Proton donor in the catalytic mechanism. Cys-116 carries the 2-(S-cysteinyl)pyruvic acid O-phosphothioketal modification. UDP-N-acetyl-alpha-D-glucosamine-binding positions include 121–125, Asp-307, and Leu-329; that span reads RPIDL.

It belongs to the EPSP synthase family. MurA subfamily.

It localises to the cytoplasm. It catalyses the reaction phosphoenolpyruvate + UDP-N-acetyl-alpha-D-glucosamine = UDP-N-acetyl-3-O-(1-carboxyvinyl)-alpha-D-glucosamine + phosphate. It functions in the pathway cell wall biogenesis; peptidoglycan biosynthesis. Functionally, cell wall formation. Adds enolpyruvyl to UDP-N-acetylglucosamine. The polypeptide is UDP-N-acetylglucosamine 1-carboxyvinyltransferase (Sulfurovum sp. (strain NBC37-1)).